The primary structure comprises 420 residues: 3-oxo-tetronate kinase (420 aa).

ATP-binding positions include Ser-258, Gly-360–Thr-363, and Gly-403.

This sequence belongs to the four-carbon acid sugar kinase family.

The catalysed reaction is 3-dehydro-L-erythronate + ATP = 3-dehydro-4-O-phospho-L-erythronate + ADP + H(+). It carries out the reaction 3-dehydro-D-erythronate + ATP = 3-dehydro-4-O-phospho-D-erythronate + ADP + H(+). Its function is as follows. Catalyzes the ATP-dependent phosphorylation of 3-oxo-tetronate to 3-oxo-tetronate 4-phosphate. This Salmonella typhimurium (strain LT2 / SGSC1412 / ATCC 700720) protein is 3-oxo-tetronate kinase.